We begin with the raw amino-acid sequence, 258 residues long: NH(3)-dependent NAD(+) synthetase (258 aa).

G34–S41 contacts ATP. D40 is a binding site for Mg(2+). Deamido-NAD(+) is bound at residue R116. Residue T136 participates in ATP binding. E141 is a Mg(2+) binding site. Residues K165 and S187 each coordinate ATP.

It belongs to the NAD synthetase family. As to quaternary structure, homodimer.

It carries out the reaction deamido-NAD(+) + NH4(+) + ATP = AMP + diphosphate + NAD(+) + H(+). It participates in cofactor biosynthesis; NAD(+) biosynthesis; NAD(+) from deamido-NAD(+) (ammonia route): step 1/1. Catalyzes the ATP-dependent amidation of deamido-NAD to form NAD. Uses ammonia as a nitrogen source. This Fusobacterium nucleatum subsp. nucleatum (strain ATCC 25586 / DSM 15643 / BCRC 10681 / CIP 101130 / JCM 8532 / KCTC 2640 / LMG 13131 / VPI 4355) protein is NH(3)-dependent NAD(+) synthetase.